We begin with the raw amino-acid sequence, 389 residues long: Phospho-N-acetylmuramoyl-pentapeptide-transferase (389 aa).

11 consecutive transmembrane segments (helical) span residues 21–41, 71–91, 97–117, 134–154, 167–187, 190–210, 222–242, 259–279, 286–306, 311–331, and 366–386; these read YITM…LVAG, TPTM…LLWA, FVWV…MDDY, FFWQ…AVSA, WVSS…VPFF, VSYP…IVGT, GLAI…AYVV, AAEL…FLWF, VFMG…IAVI, IVLF…MMQV, and QVVV…LSTL.

Belongs to the glycosyltransferase 4 family. MraY subfamily. Requires Mg(2+) as cofactor.

Its subcellular location is the cell inner membrane. It catalyses the reaction UDP-N-acetyl-alpha-D-muramoyl-L-alanyl-gamma-D-glutamyl-meso-2,6-diaminopimeloyl-D-alanyl-D-alanine + di-trans,octa-cis-undecaprenyl phosphate = di-trans,octa-cis-undecaprenyl diphospho-N-acetyl-alpha-D-muramoyl-L-alanyl-D-glutamyl-meso-2,6-diaminopimeloyl-D-alanyl-D-alanine + UMP. The protein operates within cell wall biogenesis; peptidoglycan biosynthesis. Functionally, catalyzes the initial step of the lipid cycle reactions in the biosynthesis of the cell wall peptidoglycan: transfers peptidoglycan precursor phospho-MurNAc-pentapeptide from UDP-MurNAc-pentapeptide onto the lipid carrier undecaprenyl phosphate, yielding undecaprenyl-pyrophosphoryl-MurNAc-pentapeptide, known as lipid I. The polypeptide is Phospho-N-acetylmuramoyl-pentapeptide-transferase (Bordetella petrii (strain ATCC BAA-461 / DSM 12804 / CCUG 43448)).